Reading from the N-terminus, the 249-residue chain is DNA polymerase sliding clamp (249 aa).

It belongs to the PCNA family. As to quaternary structure, homotrimer which circularizes head-to-tail (head is a N-terminus, tail is at C-terminus) to form a toroid. RFC opens the toroid so it can load on DNA. Interacts with both Pol I (pol) and Pol II (polB-polC), with Hel308 (hjm) and with Hjc. Interaction with the C-terminal PIP-box of RfcL may stabilize the toroidal structure.

Functionally, sliding clamp subunit that acts as a moving platform for DNA processing. Responsible for tethering the catalytic subunit of DNA polymerase to DNA during high-speed replication. Unlike its eukaryotic paralog, loads on circular DNA without the replication factor C (RFC) clamp loader, although RFC greatly increases loading efficiency. Stimulates the ATPase activity of replication factor C (RFC) in the presence of ssDNA. Stimulates the helicase activity of Hel308 and may alter its substrate specificity. In Pyrococcus furiosus (strain ATCC 43587 / DSM 3638 / JCM 8422 / Vc1), this protein is DNA polymerase sliding clamp.